The sequence spans 276 residues: Small ribosomal subunit protein uS3 (276 aa).

Positions 17-86 (VDEYLAKELD…NPQIDVQDVG (70 aa)) constitute a KH type-2 domain. Residues 193 to 276 (FQINAPPKEP…AETHGDIQDR (84 aa)) are disordered. Low complexity predominate over residues 214–227 (EAEPSQAAETQEQQ). Basic and acidic residues-rich tracts occupy residues 228–240 (AGEKKSELDRLLD) and 258–276 (PESRTEMSEAETHGDIQDR).

The protein belongs to the universal ribosomal protein uS3 family. As to quaternary structure, part of the 30S ribosomal subunit.

In terms of biological role, binds the lower part of the 30S subunit head. The sequence is that of Small ribosomal subunit protein uS3 from Methanothrix thermoacetophila (strain DSM 6194 / JCM 14653 / NBRC 101360 / PT) (Methanosaeta thermophila).